The following is a 666-amino-acid chain: DNA mismatch repair protein MutL (666 aa).

Belongs to the DNA mismatch repair MutL/HexB family.

Its function is as follows. This protein is involved in the repair of mismatches in DNA. It is required for dam-dependent methyl-directed DNA mismatch repair. May act as a 'molecular matchmaker', a protein that promotes the formation of a stable complex between two or more DNA-binding proteins in an ATP-dependent manner without itself being part of a final effector complex. This is DNA mismatch repair protein MutL from Clostridium botulinum (strain ATCC 19397 / Type A).